The sequence spans 472 residues: Trigger factor (472 aa).

Residues G174–P261 form the PPIase FKBP-type domain. A disordered region spans residues N433–S472. Over residues K439–K451 the composition is skewed to basic and acidic residues.

Belongs to the FKBP-type PPIase family. Tig subfamily.

It localises to the cytoplasm. It catalyses the reaction [protein]-peptidylproline (omega=180) = [protein]-peptidylproline (omega=0). Its function is as follows. Involved in protein export. Acts as a chaperone by maintaining the newly synthesized protein in an open conformation. Functions as a peptidyl-prolyl cis-trans isomerase. The chain is Trigger factor from Prochlorococcus marinus (strain NATL1A).